The chain runs to 353 residues: Protein pelota homolog (353 aa).

The protein belongs to the eukaryotic release factor 1 family. Pelota subfamily. As to quaternary structure, monomer. A divalent metal cation serves as cofactor.

The protein resides in the cytoplasm. May function in recognizing stalled ribosomes, interact with stem-loop structures in stalled mRNA molecules, and effect endonucleolytic cleavage of the mRNA. May play a role in the release non-functional ribosomes and degradation of damaged mRNAs. Has endoribonuclease activity. The sequence is that of Protein pelota homolog from Methanothermobacter thermautotrophicus (strain ATCC 29096 / DSM 1053 / JCM 10044 / NBRC 100330 / Delta H) (Methanobacterium thermoautotrophicum).